A 101-amino-acid polypeptide reads, in one-letter code: MANITVTFTITEFCLHTGVTEEELNEIVGLGVIEPYEDDNADWQFDDRAASVVQRALRLREELALDWPGIAVALTLLEENSRLREENRLLLQRLSRFISHP.

This sequence belongs to the CbpM family.

Interacts with CbpA and inhibits both the DnaJ-like co-chaperone activity and the DNA binding activity of CbpA. Together with CbpA, modulates the activity of the DnaK chaperone system. Does not inhibit the co-chaperone activity of DnaJ. The chain is Chaperone modulatory protein CbpM from Salmonella agona (strain SL483).